The following is a 689-amino-acid chain: Translation initiation factor IF-2 (689 aa).

Residues 41-109 (DYERVFGGGN…EAPAAEEREA (69 aa)) form a disordered region. Residues 61-70 (RKGRQKKRRR) show a composition bias toward basic residues. Low complexity predominate over residues 80-94 (RGPRAAAPSRPSRGR). The span at 96 to 109 (AAREEAPAAEEREA) shows a compositional bias: basic and acidic residues. Residues 192 to 361 (EKPPVITVMG…LVVAELEELR (170 aa)) form the tr-type G domain. Residues 201–208 (GHVDHGKT) form a G1 region. A GTP-binding site is contributed by 201 to 208 (GHVDHGKT). A G2 region spans residues 226-230 (GITQH). The segment at 247-250 (DTPG) is G3. Residues 247–251 (DTPGH) and 301–304 (NKID) each bind GTP. The interval 301 to 304 (NKID) is G4. The interval 337–339 (SAK) is G5.

It belongs to the TRAFAC class translation factor GTPase superfamily. Classic translation factor GTPase family. IF-2 subfamily.

The protein localises to the cytoplasm. In terms of biological role, one of the essential components for the initiation of protein synthesis. Protects formylmethionyl-tRNA from spontaneous hydrolysis and promotes its binding to the 30S ribosomal subunits. Also involved in the hydrolysis of GTP during the formation of the 70S ribosomal complex. This is Translation initiation factor IF-2 from Rubrobacter xylanophilus (strain DSM 9941 / JCM 11954 / NBRC 16129 / PRD-1).